Consider the following 407-residue polypeptide: MKNNRITKIINQYEYKIFYKRIAFTILILLIYILGSKITIVDENAMRQHDSAFYKLAVSNMGGDIHQLNVFSLGLGPWLTAMIIISLITYKNMEKAMHQTRAEKHYKEKFLTLGLSIIQGYFVINQFVRHTDAKRFTELLLLLILVTGAMLMMWLADQNMRYGIAGPMPIVLLSVIKSMFTQSLPIVSIEILMLVVMVILIIVALFILLLTELIEYRIHYRDIIEMPTPGQPTYLAWKINPGGSISIMISLSVFLLLTSTINLIFNMVTGKTPHLQWLSFGHYMGVTIYLILQTVLGYLLSRLIVNTKQNTKDFLKNGNYFIGIRPGADTGNYLNHLAKRLCWFGTTIVTAIIGVPLYISLLVPDLSEYIYFAVQLMIMVYLAMNITETMRTYLYFDKYGAFLNQYW.

The next 10 membrane-spanning stretches (helical) occupy residues 22–42 (IAFTILILLIYILGSKITIVD), 68–88 (LNVFSLGLGPWLTAMIIISLI), 108–128 (EKFLTLGLSIIQGYFVINQFV), 136–156 (FTELLLLLILVTGAMLMMWLA), 169–189 (PIVLLSVIKSMFTQSLPIVSI), 191–211 (ILMLVVMVILIIVALFILLLT), 245–265 (ISIMISLSVFLLLTSTINLIF), 280–300 (FGHYMGVTIYLILQTVLGYLL), 343–363 (WFGTTIVTAIIGVPLYISLLV), and 366–386 (LSEYIYFAVQLMIMVYLAMNI).

It belongs to the SecY/SEC61-alpha family. SecY2 subfamily. In terms of assembly, component of the accessory SecA2/SecY2 protein translocase complex required to export cell wall proteins. May form heterotrimers with SecE and SecG subunits.

It is found in the cell membrane. In terms of biological role, part of the accessory SecA2/SecY2 system specifically required for export of possible cell wall proteins. The central subunit of a protein translocation channel. The protein is Accessory Sec system protein translocase subunit SecY2 of Staphylococcus pseudintermedius (strain ED99).